Reading from the N-terminus, the 483-residue chain is MVATTETTNIGKITQIIGPVVDAEFPSGKMPRIYNALRVEGKNAAGQDVAVTCEVQQLLGDNQVRAVSMSSTDGLVRGMEITDTGAPINVPVGKATLGRIFNILGEPVDNQGPVYTAETSPIHRAAPKFTDLDTKPTVFETGIKVIDLLTPYRRGGKIGLFGGAGVGKTVIMMELINNIAINHGGVSVFGGVGERTREGNDLYNEMIESKVINADNLNESKIALVYGQMNEPPGARMRVGLSALTMAEYFRDVNKQDVLLFIDNIFRFVQAGSEVSALLGRMPSAVGYQPTLGTDVGDLQERITSTKEGSITSIQAVYVPADDLTDPAPATTFAHLDGTTVLSRGLASKGIYPAVDPLDSTSTMLQAGIVGEDHYNTARAVQSTLQRYKELQDIIAILGLDELSEEDRLIVDRARKVERFLSQPFFVAEVFTGAPGKYVSLEDTIKGFKMILSGELDDLPEQAFYLVGDIQEAKAKAEKLKQD.

162–169 (GGAGVGKT) provides a ligand contact to ATP.

The protein belongs to the ATPase alpha/beta chains family. As to quaternary structure, F-type ATPases have 2 components, CF(1) - the catalytic core - and CF(0) - the membrane proton channel. CF(1) has five subunits: alpha(3), beta(3), gamma(1), delta(1), epsilon(1). CF(0) has four main subunits: a(1), b(1), b'(1) and c(9-12).

The protein resides in the cellular thylakoid membrane. The catalysed reaction is ATP + H2O + 4 H(+)(in) = ADP + phosphate + 5 H(+)(out). In terms of biological role, produces ATP from ADP in the presence of a proton gradient across the membrane. The catalytic sites are hosted primarily by the beta subunits. The chain is ATP synthase subunit beta from Prochloron didemni.